An 878-amino-acid chain; its full sequence is Probable di- and tripeptidase DUG2 (878 aa).

5 WD repeats span residues 18-57 (NHAF…LIHT), 68-107 (HTRS…IRDD), 235-274 (RFNQ…GQNT), 282-322 (DKID…IIST), and 362-405 (PQQG…SAVP). H520 contacts Zn(2+). D522 is a catalytic residue. D553 is a binding site for Zn(2+). Residue E586 is the Proton acceptor of the active site. A Zn(2+)-binding site is contributed by E587. One copy of the WD 6 repeat lies at 608 to 651 (IDWILLSNSTWVDQEHPCLNYGLRGVINAQIKVWSDKPDGHSGL). H853 contributes to the Zn(2+) binding site.

Belongs to the peptidase M20A family. Component of the GSH degradosomal complex composed of at least DUG1, DUG2 and DUG3. Zn(2+) is required as a cofactor.

It is found in the cytoplasm. The protein localises to the nucleus. Functionally, component of the GSH degradosomal complex involved in the degradation of glutathione (GSH) and other peptides containing a gamma-glu-X bond. The polypeptide is Probable di- and tripeptidase DUG2 (DUG2) (Saccharomyces cerevisiae (strain ATCC 204508 / S288c) (Baker's yeast)).